The primary structure comprises 206 residues: MEFLMTLVFLVLLVEIVFCTFFMLPVSMHLRKNVYNKLDKLFGGQNAKIFLKVLALLVIIVFCDSIVNSYNINKKLHTPELTGAKFDRQNEYTRMFRYQRNSYICGFCLYLFFLIYRSQGIISQLSNVEASKTAIEKQTKNNLNTVETLLSENEKLKTEIKDLKKMEKEHKAMKSQAENTTKEYLKLQEEYNQLLGKKPKTQKKDD.

Residues Met-1–Glu-2 lie on the Lumenal side of the membrane. The chain crosses the membrane as a helical span at residues Phe-3 to Met-23. At Leu-24–Asn-46 the chain is on the cytoplasmic side. The helical transmembrane segment at Ala-47 to Val-67 threads the bilayer. At Asn-68–Asn-101 the chain is on the lumenal side. Residues Ser-102–Ile-122 form a helical membrane-spanning segment. The Cytoplasmic segment spans residues Ser-123–Asp-206. A coiled-coil region spans residues Lys-140–Lys-198. Positions Lys-203–Asp-206 match the Di-lysine motif motif.

This sequence belongs to the BCAP29/BCAP31 family.

It is found in the endoplasmic reticulum membrane. May play a role in anterograde transport of membrane proteins from the endoplasmic reticulum to the Golgi. The chain is Endoplasmic reticulum transmembrane protein YET-like from Dictyostelium discoideum (Social amoeba).